The primary structure comprises 37 residues: Large ribosomal subunit protein bL36A (37 aa).

It belongs to the bacterial ribosomal protein bL36 family.

The sequence is that of Large ribosomal subunit protein bL36A from Arthrobacter sp. (strain FB24).